A 93-amino-acid chain; its full sequence is Putative membrane protein insertion efficiency factor (93 aa).

Residues 72–93 form a disordered region; sequence VPEHFPSWRGPHPKTPSRKTPE. The span at 82 to 93 shows a compositional bias: basic residues; sequence PHPKTPSRKTPE.

This sequence belongs to the UPF0161 family.

It is found in the cell membrane. Could be involved in insertion of integral membrane proteins into the membrane. This is Putative membrane protein insertion efficiency factor from Deinococcus geothermalis (strain DSM 11300 / CIP 105573 / AG-3a).